Here is a 142-residue protein sequence, read N- to C-terminus: Small ribosomal subunit protein uS12 (142 aa).

It belongs to the universal ribosomal protein uS12 family. In terms of assembly, part of the 30S ribosomal subunit.

With S4 and S5 plays an important role in translational accuracy. Located at the interface of the 30S and 50S subunits. The protein is Small ribosomal subunit protein uS12 of Methanosarcina barkeri (strain Fusaro / DSM 804).